The sequence spans 37 residues: Cytochrome bd-I ubiquinol oxidase subunit X (37 aa).

Residues 4-24 (FAWILGTLLACSFGVITALAL) form a helical membrane-spanning segment.

The protein belongs to the cytochrome ubiquinol oxidase subunit X family. May be a subunit of cytochrome bd-I ubiquinol oxidase. Probably interacts with CydA and CydB.

The protein localises to the cell inner membrane. The enzyme catalyses 2 a ubiquinol + O2(in) + 4 H(+)(in) = 2 a ubiquinone + 2 H2O(in) + 4 H(+)(out). Its pathway is energy metabolism; oxidative phosphorylation. Its function is as follows. Required for correct functioning of cytochrome bd-I oxidase. This protein and AppX may have some functional overlap. This Escherichia coli (strain K12) protein is Cytochrome bd-I ubiquinol oxidase subunit X (cydX).